A 539-amino-acid chain; its full sequence is Glucans biosynthesis protein D (539 aa).

A signal peptide (tat-type signal) is located at residues Met1 to Ala29.

The protein belongs to the OpgD/OpgG family. Post-translationally, predicted to be exported by the Tat system. The position of the signal peptide cleavage has not been experimentally proven.

Its subcellular location is the periplasm. Its pathway is glycan metabolism; osmoregulated periplasmic glucan (OPG) biosynthesis. Probably involved in the control of the structural glucose backbone of osmoregulated periplasmic glucans (OPGs). This chain is Glucans biosynthesis protein D, found in Pseudomonas syringae pv. syringae (strain B728a).